The chain runs to 301 residues: uncharacterized protein (301 aa).

Residues 1 to 21 (MKIKLILVLIVFLTIVNVNNS) form the signal peptide. Residues N19, N59, N102, and N180 are each glycosylated (N-linked (GlcNAc...) asparagine).

The protein resides in the secreted. This is an uncharacterized protein from Dictyostelium discoideum (Social amoeba).